The primary structure comprises 564 residues: Arginine--tRNA ligase (564 aa).

A 'HIGH' region motif is present at residues 136–146 (ANPTGPLHMGN).

This sequence belongs to the class-I aminoacyl-tRNA synthetase family. As to quaternary structure, monomer.

It is found in the cytoplasm. It catalyses the reaction tRNA(Arg) + L-arginine + ATP = L-arginyl-tRNA(Arg) + AMP + diphosphate. The polypeptide is Arginine--tRNA ligase (Acetivibrio thermocellus (strain ATCC 27405 / DSM 1237 / JCM 9322 / NBRC 103400 / NCIMB 10682 / NRRL B-4536 / VPI 7372) (Clostridium thermocellum)).